A 250-amino-acid polypeptide reads, in one-letter code: Pyrroloquinoline-quinone synthase (250 aa).

The protein belongs to the PqqC family.

The enzyme catalyses 6-(2-amino-2-carboxyethyl)-7,8-dioxo-1,2,3,4,7,8-hexahydroquinoline-2,4-dicarboxylate + 3 O2 = pyrroloquinoline quinone + 2 H2O2 + 2 H2O + H(+). The protein operates within cofactor biosynthesis; pyrroloquinoline quinone biosynthesis. Ring cyclization and eight-electron oxidation of 3a-(2-amino-2-carboxyethyl)-4,5-dioxo-4,5,6,7,8,9-hexahydroquinoline-7,9-dicarboxylic-acid to PQQ. The sequence is that of Pyrroloquinoline-quinone synthase from Xanthomonas campestris pv. campestris (strain B100).